Reading from the N-terminus, the 252-residue chain is Probable S-methyl-5'-thioinosine phosphorylase (252 aa).

Phosphate contacts are provided by residues T8 and 44 to 45 (RH). Position 173 (M173) interacts with substrate. T174 is a binding site for phosphate. Residue 197 to 199 (NYA) coordinates substrate.

It belongs to the PNP/MTAP phosphorylase family. MTAP subfamily. In terms of assembly, homotrimer.

The catalysed reaction is S-methyl-5'-thioinosine + phosphate = 5-(methylsulfanyl)-alpha-D-ribose 1-phosphate + hypoxanthine. Its pathway is purine metabolism; purine nucleoside salvage. In terms of biological role, catalyzes the reversible phosphorylation of S-methyl-5'-thioinosine (MTI) to hypoxanthine and 5-methylthioribose-1-phosphate. Involved in the breakdown of S-methyl-5'-thioadenosine (MTA), a major by-product of polyamine biosynthesis. Catabolism of (MTA) occurs via deamination to MTI and phosphorolysis to hypoxanthine. The protein is Probable S-methyl-5'-thioinosine phosphorylase of Methanocaldococcus jannaschii (strain ATCC 43067 / DSM 2661 / JAL-1 / JCM 10045 / NBRC 100440) (Methanococcus jannaschii).